Consider the following 389-residue polypeptide: Heat-inducible transcription repressor HrcA (389 aa).

The protein belongs to the HrcA family.

Its function is as follows. Negative regulator of class I heat shock genes (grpE-dnaK-dnaJ and groELS operons). Prevents heat-shock induction of these operons. The polypeptide is Heat-inducible transcription repressor HrcA (Synechococcus sp. (strain JA-2-3B'a(2-13)) (Cyanobacteria bacterium Yellowstone B-Prime)).